Consider the following 151-residue polypeptide: S-ribosylhomocysteine lyase (151 aa).

Fe cation contacts are provided by His-54, His-58, and Cys-121.

It belongs to the LuxS family. Homodimer. Fe cation is required as a cofactor.

It catalyses the reaction S-(5-deoxy-D-ribos-5-yl)-L-homocysteine = (S)-4,5-dihydroxypentane-2,3-dione + L-homocysteine. In terms of biological role, involved in the synthesis of autoinducer 2 (AI-2) which is secreted by bacteria and is used to communicate both the cell density and the metabolic potential of the environment. The regulation of gene expression in response to changes in cell density is called quorum sensing. Catalyzes the transformation of S-ribosylhomocysteine (RHC) to homocysteine (HC) and 4,5-dihydroxy-2,3-pentadione (DPD). This is S-ribosylhomocysteine lyase from Clostridioides difficile (strain 630) (Peptoclostridium difficile).